Consider the following 511-residue polypeptide: 2'-5'-oligoadenylate synthase-like protein 1 (511 aa).

Ubiquitin-like domains are found at residues 350 to 429 (IQVT…ISPE) and 430 to 506 (IQVF…EGAA).

The protein belongs to the 2-5A synthase family. As to quaternary structure, specifically interacts with the ligand binding domain of the thyroid receptor (TR). TRIP14 does not require the presence of thyroid hormone for its interaction. Binds MBD1.

It localises to the nucleus. Its subcellular location is the nucleolus. It is found in the cytoplasm. In terms of biological role, does not have 2'-5'-OAS activity, but can bind double-stranded RNA. Displays antiviral activity via an alternative antiviral pathway independent of RNase L. In Mus musculus (Mouse), this protein is 2'-5'-oligoadenylate synthase-like protein 1 (Oasl1).